The following is a 789-amino-acid chain: Leucine-rich repeat and fibronectin type-III domain-containing protein 2 (789 aa).

An N-terminal signal peptide occupies residues 1–20 (METLLGGLLAFGMAFAVVDA). One can recognise an LRRNT domain in the interval 21–52 (CPKYCVCQNLSESLGTLCPSKGLLFVPPDIDR). Topologically, residues 21–534 (CPKYCVCQNL…MHSQILGGTM (514 aa)) are extracellular. N-linked (GlcNAc...) asparagine glycosylation is present at N29. LRR repeat units lie at residues 53-74 (RTVE…DFAN), 77-98 (GLVD…SFLD), 101-122 (SLRS…TLRG), 125-146 (NLQH…AFED), 150-171 (TLED…SVRR), 174-195 (NLHQ…TFAD), and 198-219 (KLAR…PIFA). An LRRCT domain is found at 242–288 (NPLHCNCELLWLRRLERDDDLETCGSPGGLKGRYFWHVREEEFVCEP). The Ig-like domain maps to 289 to 375 (PLITQHTHKL…GEATAMVEVS (87 aa)). A disulfide bridge links C310 with C359. N332, N341, and N384 each carry an N-linked (GlcNAc...) asparagine glycan. The interval 383–424 (SNSTSRTAPPKSRLSDITGSSKTSRGGGGSGGGEPPKSPPER) is disordered. The span at 407–416 (RGGGGSGGGE) shows a compositional bias: gly residues. The Fibronectin type-III domain occupies 421-518 (PPERAVLVSE…GCAQFFTKAD (98 aa)). A helical membrane pass occupies residues 535-555 (ILVIGGIIVATLLVFIVILMV). Residues 556-789 (RYKVCNHEAP…SSEWVMESTV (234 aa)) are Cytoplasmic-facing. Disordered stretches follow at residues 577 to 602 (SQTN…PPKV), 619 to 654 (SDSS…PSLD), and 668 to 702 (QRKE…LGPP). Residues 583–599 (QPPPPSSAPAGAPPQGP) show a composition bias toward pro residues. Positions 619–638 (SDSSSSSSLGSGEAAGLGRA) are enriched in low complexity. A compositionally biased stretch (pro residues) spans 641 to 650 (RIPPSAPRPK). The PDZ-binding motif lies at 786-789 (ESTV).

This sequence belongs to the LRFN family. Forms heteromeric complexes with LRFN1, LRFN3, LRFN4 and LRFN5. Can form homomeric complexes, but not across cell junctions. Directly interacts with 2 NMDA receptor subunits GRIN1 and GRIN2A. Interacts with DLG1, DLG2, DLG3 and DLG4. Glycosylated.

The protein localises to the membrane. The protein resides in the synapse. It localises to the postsynaptic cell membrane. Promotes neurite outgrowth in hippocampal neurons. Enhances the cell surface expression of 2 NMDA receptor subunits GRIN1 and GRIN2A. May play a role in redistributing DLG4 to the cell periphery. This Homo sapiens (Human) protein is Leucine-rich repeat and fibronectin type-III domain-containing protein 2 (LRFN2).